Consider the following 86-residue polypeptide: Teretoxin Tsu6.16 (86 aa).

Positions methionine 1–leucine 21 are cleaved as a signal peptide. Positions glycine 22–asparagine 46 are excised as a propeptide.

It belongs to the teretoxin M (TM) superfamily. In terms of processing, contains 3 disulfide bonds. In terms of tissue distribution, expressed by the venom duct.

Its subcellular location is the secreted. The sequence is that of Teretoxin Tsu6.16 from Terebra subulata (Chocolate spotted auger).